We begin with the raw amino-acid sequence, 183 residues long: NRR repressor homolog 1 (183 aa).

2 disordered regions span residues 1 to 40 (MEGVDVKAPRPGCGGDDGGAAAASLSARREEEEEGAVVGG) and 66 to 183 (NGEE…PTDQ). A compositionally biased stretch (acidic residues) spans 31 to 40 (EEEEGAVVGG). The span at 70–79 (GAAGGDGDGA) shows a compositional bias: gly residues. Residues 101–115 (FEFEEAAAGAGDDDA) show a composition bias toward acidic residues. Basic and acidic residues predominate over residues 135 to 145 (AVEKRRTEKEA). Residues 150–161 (AEDDDDEQEGGE) show a composition bias toward acidic residues. The segment covering 163–183 (VEGKEEHRPGRRVEAHGPTDQ) has biased composition (basic and acidic residues).

The protein belongs to the NPR1-interactor family. As to quaternary structure, interacts with NPR1/NH1. Interacts with NPR3/NH3.

Its subcellular location is the nucleus. Binds to and represses NPR1/NH1-mediated transcriptional activation of LG2 in vitro. The sequence is that of NRR repressor homolog 1 from Oryza sativa subsp. japonica (Rice).